Reading from the N-terminus, the 1137-residue chain is DNA-directed RNA polymerase III subunit RPC2 (1137 aa).

The C4-type zinc-finger motif lies at 1084-1099; it reads DVCRTCGRMAYCSWCH. Cys-1086, Cys-1089, Cys-1098, and Cys-1101 together coordinate Zn(2+).

It belongs to the RNA polymerase beta chain family. As to quaternary structure, component of the RNA polymerase III (Pol III) complex consisting of 17 subunits.

Its subcellular location is the nucleus. The catalysed reaction is RNA(n) + a ribonucleoside 5'-triphosphate = RNA(n+1) + diphosphate. Functionally, DNA-dependent RNA polymerase catalyzes the transcription of DNA into RNA using the four ribonucleoside triphosphates as substrates. Second largest core component of RNA polymerase III which synthesizes small RNAs, such as 5S rRNA and tRNAs. Proposed to contribute to the polymerase catalytic activity and forms the polymerase active center together with the largest subunit. Pol III is composed of mobile elements and Polr3B is part of the core element with the central large cleft and probably a clamp element that moves to open and close the cleft. This chain is DNA-directed RNA polymerase III subunit RPC2, found in Drosophila melanogaster (Fruit fly).